The following is a 377-amino-acid chain: Histone deacetylase 8 (377 aa).

Residues leucine 14–glycine 324 are histone deacetylase. The residue at position 39 (serine 39) is a Phosphoserine. Aspartate 101 provides a ligand contact to substrate. Histidine 143 acts as the Proton acceptor in catalysis. Residue glycine 151 coordinates substrate. Aspartate 178, histidine 180, and aspartate 267 together coordinate a divalent metal cation. Residue tyrosine 306 coordinates substrate.

This sequence belongs to the histone deacetylase family. HD type 1 subfamily. As to quaternary structure, interacts with PEPB2-MYH11, a fusion protein consisting of the 165 N-terminal residues of CBF-beta (PEPB2) with the tail region of MYH11 produced by the inversion Inv(16)(p13q22), a translocation associated with acute myeloid leukemia of M4EO subtype. The PEPB2-MYH1 fusion protein also interacts with RUNX1, a well known transcriptional regulator, suggesting that the interaction with HDAC8 may participate in the conversion of RUNX1 into a constitutive transcriptional repressor. Interacts with CBFA2T3. Interacts with phosphorylated SMG5/EST1B; this interaction protects SMG5 from ubiquitin-mediated degradation. Associates with alpha-SMA (smooth muscle alpha-actin). A divalent metal cation serves as cofactor. Phosphorylated by PKA on serine 39. Phosphorylation reduces deacetylase activity observed preferentially on histones H3 and H4. In terms of tissue distribution, weakly expressed in most tissues. Expressed at higher level in heart, brain, kidney and pancreas and also in liver, lung, placenta, prostate and kidney.

It localises to the nucleus. The protein resides in the chromosome. It is found in the cytoplasm. The enzyme catalyses N(6)-acetyl-L-lysyl-[histone] + H2O = L-lysyl-[histone] + acetate. It carries out the reaction N(6)-acetyl-L-lysyl-[protein] + H2O = L-lysyl-[protein] + acetate. It catalyses the reaction N(6)-(2E)-butenoyl-L-lysyl-[protein] + H2O = (2E)-2-butenoate + L-lysyl-[protein]. With respect to regulation, its activity is inhibited by trichostatin A (TSA), suberoylanilide hydroxamic acid (SAHA), 3-(1-methyl-4-phenylacetyl-1H-2-pyrrolyl)-N-hydroxy-2-propenamide (APHA), 4-dimethylamino-N-(6-hydroxycarbamoyethyl)benzamide-N-hydroxy-7-(4-dimethylaminobenzoyl)aminoheptanamide (MS-344), 5-(4-methyl-benzoylamino)-biphenyl-3,4'-dicarboxylic acid 3-dimethylamide 4'-hydroxyamide (CRA-A) and butyrate. Functionally, histone deacetylase that catalyzes the deacetylation of lysine residues on the N-terminal part of the core histones (H2A, H2B, H3 and H4). Histone deacetylation gives a tag for epigenetic repression and plays an important role in transcriptional regulation, cell cycle progression and developmental events. Histone deacetylases act via the formation of large multiprotein complexes. Also involved in the deacetylation of cohesin complex protein SMC3 regulating release of cohesin complexes from chromatin. May play a role in smooth muscle cell contractility. In addition to protein deacetylase activity, also has protein-lysine deacylase activity: acts as a protein decrotonylase by mediating decrotonylation ((2E)-butenoyl) of histones. The chain is Histone deacetylase 8 from Homo sapiens (Human).